Here is a 739-residue protein sequence, read N- to C-terminus: Catalase-peroxidase (739 aa).

The tract at residues 1–33 is disordered; the sequence is MSVEHPPIGEANTEPAAGGCPVTGRLRHPLQGG. The segment at residues 106–229 is a cross-link (tryptophyl-tyrosyl-methioninium (Trp-Tyr) (with M-255)); the sequence is WHSAGTYRSS…LAAVQMGLIY (124 aa). The active-site Proton acceptor is the H107. The segment at 113-134 is disordered; that stretch reads RSSDGRGGANTGQQRFAPLNSW. The segment at residues 229 to 255 is a cross-link (tryptophyl-tyrosyl-methioninium (Tyr-Met) (with W-106)); that stretch reads YVNPEGPNGNPDPLAAAVDIKDTFGRM. H270 is a heme b binding site.

It belongs to the peroxidase family. Peroxidase/catalase subfamily. In terms of assembly, homodimer or homotetramer. Heme b is required as a cofactor. Formation of the three residue Trp-Tyr-Met cross-link is important for the catalase, but not the peroxidase activity of the enzyme.

It carries out the reaction H2O2 + AH2 = A + 2 H2O. The catalysed reaction is 2 H2O2 = O2 + 2 H2O. Its function is as follows. Bifunctional enzyme with both catalase and broad-spectrum peroxidase activity. This chain is Catalase-peroxidase, found in Nocardia farcinica (strain IFM 10152).